Reading from the N-terminus, the 69-residue chain is Amphipathic peptide Hp1404 (69 aa).

The signal sequence occupies residues 1-23 (MKTQFAILMITVVLMQMLVQTEG). At F37 the chain carries Phenylalanine amide. Positions 41-69 (GLKNLDQLDDSFDSDLSDADVKLLREMFK) are excised as a propeptide.

The protein belongs to the non-disulfide-bridged peptide (NDBP) superfamily. Short antimicrobial peptide (group 4) family. Expressed by the venom gland.

It localises to the secreted. Its subcellular location is the target cell membrane. With respect to regulation, antibacterial activity is decreased by serum. Antimicrobial peptide that acts by inducing concentration-dependent membrane disruption, implying a membrane-lytic mode of action. Acts with potent activity against Gram-positive bacteria (MIC=4.04-16.16 uM) including methicillin-resistant S.aureus (MRSA). Its activity on Gram-negative bacteria is controversial. Li and colleagues (2014) describe no activity towards E.coli and P.aeruginosa, while Kim and colleagues (2018) describe a potent activity towards P.aeruginosa (MIC=3.13-12.5 uM), and Luo and colleagues (2021) describe a potent activity against antibiotic-sensitive and -resistant Acinetobacter baumannii strains (MIC=3.2-10 uM). On S.aureus, possibly acts by impairing an unknown intracellular target and/or by interacting with the membrane, leading to the lateral expansion of the membrane area at high MIC concentrations, resulting in the formation of mesosome-like structures that leads to cell lysis. Shows moderate inhibition of P.aeruginosa biofilm formation. Administration of this peptide at sub-MIC concentrations in multiple treatments does not lead to resistance in S.aureus. Exhibits low toxicity and hemolytic activity against mammalian cell lines and BALB/c mice. In vivo, improves the survival rate of the MRSA infected BALB/c mice in the peritonitis model. This Heterometrus petersii (Asian forest scorpion) protein is Amphipathic peptide Hp1404.